A 976-amino-acid chain; its full sequence is Dolichyl-phosphooligosaccharide-protein glycotransferase 1 (976 aa).

At 1-21 (MVKSKVKKVEKGKEGEEKRST) the chain is on the cytoplasmic side. A helical transmembrane segment spans residues 22-42 (YVLLKKVLIPILVFGFAIYAF). At 43–112 (YLRHLTAGKY…KVVSLFGYNE (70 aa)) the chain is on the extracellular side. Positions 55-57 (DPD) match the DXD motif 1 motif. Asp57 contacts Mn(2+). A helical membrane pass occupies residues 113–133 (LQAFLLWPPFVGFLGVIAVYL). Residues 134 to 135 (LG) lie on the Cytoplasmic side of the membrane. Residues 136-156 (RKVLNEWTGLWGAVVLTVSTA) traverse the membrane as a helical segment. At 157-165 (NFSRTFSGN) the chain is on the extracellular side. The helical transmembrane segment at 166-186 (ARGDGPFMALFIFASVAMLYY) threads the bilayer. Arg167 and Asp169 together coordinate Mn(2+). The DXD motif 2 signature appears at 167-169 (RGD). Over 187–193 (LKESNKT) the chain is Cytoplasmic. The helical transmembrane segment at 194-214 (RKIIYGTLFVLLTVISLGAWN) threads the bilayer. Gly215 is a topological domain (extracellular). The helical transmembrane segment at 216–236 (SPFGLMVLLGFASLQTIILFI) threads the bilayer. Residues 237 to 247 (FGKLEELKKFV) are Cytoplasmic-facing. Residues 248–268 (KEFYPAYLAILAFGYALTFPG) form a helical membrane-spanning segment. Position 269 (Ile269) is a topological domain, extracellular. The helical transmembrane segment at 270 to 290 (VKIGGFIRFAFEVFLGLIFLL) threads the bilayer. Residues 291–306 (VIMLYGGRYLNYSDKK) are Cytoplasmic-facing. The helical transmembrane segment at 307–327 (HRFLVVTIIVLLGFGGAYAYV) threads the bilayer. The Extracellular portion of the chain corresponds to 328 to 360 (GPKLFRLMGGAYQSTQVYETVQELAKTTIGDVK). Residues 347–350 (TVQE) carry the TIXE motif motif. The chain crosses the membrane as a helical span at residues 361–381 (AYYGVESGNGLIFFLSIPGLL). The Cytoplasmic portion of the chain corresponds to 382–396 (ILLTKYLYDLFKKAK). Residues 397–417 (SDNETLFALVFYTMSLYLLYL) form a helical membrane-spanning segment. Residue Ala418 is a topological domain, extracellular. A helical transmembrane segment spans residues 419-439 (VRFLFLASYAVALFFGIFIGF). A glycophospholipid is bound at residue Arg420. The Cytoplasmic portion of the chain corresponds to 440–453 (SMDVIEKMKENIGI). Residues 454 to 474 (KAALGIVLSLMILVIPFVHAP) traverse the membrane as a helical segment. Topologically, residues 475-976 (VLARSARALK…SASAPHHSSE (502 aa)) are extracellular. Residues 513-515 (WWD) form an interacts with target acceptor peptide in protein substrate region. The WWDYG motif motif lies at 513-517 (WWDYG). Position 518 (Tyr518) interacts with a glycophospholipid. Residues 573-580 (DWAKFNAI) carry the DK motif motif.

This sequence belongs to the STT3 family. Requires Mn(2+) as cofactor. The cofactor is Mg(2+).

Its subcellular location is the cell membrane. The enzyme catalyses an archaeal dolichyl phosphooligosaccharide + [protein]-L-asparagine = an archaeal dolichyl phosphate + a glycoprotein with the oligosaccharide chain attached by N-beta-D-glycosyl linkage to a protein L-asparagine.. Its pathway is protein modification; protein glycosylation. Functionally, oligosaccharyl transferase (OST) that catalyzes the initial transfer of a defined glycan (ManNAcXyl(2)GlcAMan(2)GalNAc in Pyrococcus) from the lipid carrier dolichol-monophosphate to an asparagine residue within an Asn-X-Ser/Thr consensus motif in nascent polypeptide chains, the first step in protein N-glycosylation. This Pyrococcus horikoshii (strain ATCC 700860 / DSM 12428 / JCM 9974 / NBRC 100139 / OT-3) protein is Dolichyl-phosphooligosaccharide-protein glycotransferase 1 (aglB1).